Here is a 430-residue protein sequence, read N- to C-terminus: MAARLLLRSLRVLSARSATLPPPSARCSHSGAEARLETPSAKKLTDIGIRRIFSSEHDIFRESVRKFFQEEVIPYHEEWEKAGEVSRELWEKAGKQGLLGINIAEKHGGIGGDLLSTAVTWEEQAYSNCTGPGFSLHSDIVMPYIANYGTKEQIEQFIPQMTAGKCIGAIAMTEPGAGSDLQGVRTNAKRSGSDWILNGSKVFITNGWLSDLVIVVAVTNREARSPAHGISLFLVENGMKGFIKGKKLHKMGMKAQDTAELFFEDVRLPASALLGEENKGFYYLMQELPQERLLIADLAISACEFMFEETRNYVRQRKAFGKTVAHIQTVQHKLAELKTNICVTRAFVDSCLQLHETKRLDSASASMAKYWASELQNTVAYQCVQLHGGWGYMWEYPIAKAYVDARVQPIYGGTNEIMKELIARQIVSDS.

The transit peptide at 1-30 directs the protein to the mitochondrion; that stretch reads MAARLLLRSLRVLSARSATLPPPSARCSHS. Lysine 42 is modified (N6-acetyllysine). A phosphoserine mark is found at serine 54 and serine 55. N6-acetyllysine; alternate occurs at positions 66 and 81. N6-succinyllysine; alternate occurs at positions 66 and 81. Residues lysine 92 and lysine 95 each carry the N6-acetyllysine modification. Lysine 165 is subject to N6-succinyllysine. 170–179 contributes to the FAD binding site; it reads IAMTEPGAGS. Residue serine 179 participates in substrate binding. Serine 191 is modified (phosphoserine). 203 to 205 contacts FAD; the sequence is FIT. 227-228 contacts substrate; the sequence is AH. Lysine 240 carries the N6-succinyllysine modification. 2 positions are modified to N6-acetyllysine; alternate: lysine 254 and lysine 279. An N6-succinyllysine; alternate mark is found at lysine 254 and lysine 279. Substrate-binding positions include tyrosine 282 and 289–292; that span reads PQER. Residue glutamate 291 is the Proton acceptor of the active site. Arginine 317 lines the FAD pocket. An N6-acetyllysine modification is found at lysine 318. Lysine 322 bears the N6-acetyllysine; alternate mark. Position 322 is an N6-succinyllysine; alternate (lysine 322). FAD is bound at residue glutamine 328. Lysine 358 is subject to N6-acetyllysine. A Phosphoserine modification is found at serine 362. Position 385–389 (385–389) interacts with FAD; it reads QLHGG. A substrate-binding site is contributed by 412–413; sequence GG. FAD is bound at residue 414–416; the sequence is TNE.

Belongs to the acyl-CoA dehydrogenase family. As to quaternary structure, homotetramer. FAD serves as cofactor. In terms of processing, acetylation at Lys-318 and Lys-322 in proximity of the cofactor-binding sites strongly reduces catalytic activity. These sites are deacetylated by SIRT3.

It localises to the mitochondrion matrix. The enzyme catalyses a long-chain 2,3-saturated fatty acyl-CoA + oxidized [electron-transfer flavoprotein] + H(+) = a long-chain (2E)-enoyl-CoA + reduced [electron-transfer flavoprotein]. It carries out the reaction octanoyl-CoA + oxidized [electron-transfer flavoprotein] + H(+) = (2E)-octenoyl-CoA + reduced [electron-transfer flavoprotein]. It catalyses the reaction decanoyl-CoA + oxidized [electron-transfer flavoprotein] + H(+) = (2E)-decenoyl-CoA + reduced [electron-transfer flavoprotein]. The catalysed reaction is dodecanoyl-CoA + oxidized [electron-transfer flavoprotein] + H(+) = (2E)-dodecenoyl-CoA + reduced [electron-transfer flavoprotein]. The enzyme catalyses tetradecanoyl-CoA + oxidized [electron-transfer flavoprotein] + H(+) = (2E)-tetradecenoyl-CoA + reduced [electron-transfer flavoprotein]. It carries out the reaction oxidized [electron-transfer flavoprotein] + hexadecanoyl-CoA + H(+) = (2E)-hexadecenoyl-CoA + reduced [electron-transfer flavoprotein]. It catalyses the reaction octadecanoyl-CoA + oxidized [electron-transfer flavoprotein] + H(+) = (2E)-octadecenoyl-CoA + reduced [electron-transfer flavoprotein]. The catalysed reaction is (5E)-tetradecenoyl-CoA + oxidized [electron-transfer flavoprotein] + H(+) = (2E,5E)-tetradecadienoyl-CoA + reduced [electron-transfer flavoprotein]. The enzyme catalyses (5Z)-tetradecenoyl-CoA + oxidized [electron-transfer flavoprotein] + H(+) = (2E,5Z)-tetradecadienoyl-CoA + reduced [electron-transfer flavoprotein]. It carries out the reaction oxidized [electron-transfer flavoprotein] + (9Z)-octadecenoyl-CoA + H(+) = (2E,9Z)-octadecadienoyl-CoA + reduced [electron-transfer flavoprotein]. It catalyses the reaction hexanoyl-CoA + oxidized [electron-transfer flavoprotein] + H(+) = (2E)-hexenoyl-CoA + reduced [electron-transfer flavoprotein]. The catalysed reaction is eicosanoyl-CoA + oxidized [electron-transfer flavoprotein] + H(+) = (2E)-eicosenoyl-CoA + reduced [electron-transfer flavoprotein]. The enzyme catalyses docosanoyl-CoA + oxidized [electron-transfer flavoprotein] + H(+) = (2E)-docosenoyl-CoA + reduced [electron-transfer flavoprotein]. It carries out the reaction tetracosanoyl-CoA + oxidized [electron-transfer flavoprotein] + H(+) = (2E)-tetracosenoyl-CoA + reduced [electron-transfer flavoprotein]. It participates in lipid metabolism; mitochondrial fatty acid beta-oxidation. Its activity is regulated as follows. Inhibited by crotonyl-CoA, 2-octenoyl-CoA and 2-hexadecenoyl-CoA. In terms of biological role, long-chain specific acyl-CoA dehydrogenase is one of the acyl-CoA dehydrogenases that catalyze the first step of mitochondrial fatty acid beta-oxidation, an aerobic process breaking down fatty acids into acetyl-CoA and allowing the production of energy from fats. The first step of fatty acid beta-oxidation consists in the removal of one hydrogen from C-2 and C-3 of the straight-chain fatty acyl-CoA thioester, resulting in the formation of trans-2-enoyl-CoA. Among the different mitochondrial acyl-CoA dehydrogenases, long-chain specific acyl-CoA dehydrogenase can act on saturated and unsaturated acyl-CoAs with 6 to 24 carbons with a preference for 8 to 18 carbons long primary chains. The chain is Long-chain specific acyl-CoA dehydrogenase, mitochondrial from Rattus norvegicus (Rat).